We begin with the raw amino-acid sequence, 321 residues long: Olfactory receptor 3A2 (321 aa).

At 1–35 the chain is on the extracellular side; the sequence is MSLQKLMEPEAGTNRTAVAEFILLGLVQTEEMQPV. N14 carries N-linked (GlcNAc...) asparagine glycosylation. A helical membrane pass occupies residues 36 to 58; sequence VFVLLLFAYLVTTGGNLSILAAV. Residues 59 to 66 are Cytoplasmic-facing; sequence LVEPKLHA. Residues 67–88 traverse the membrane as a helical segment; sequence PMYFFLGNLSVLDVGCITVTVP. Residues 89 to 109 are Extracellular-facing; the sequence is AMLGRLLSHKSTISYDACLSQ. Residues C106 and C198 are joined by a disulfide bond. Residues 110–129 traverse the membrane as a helical segment; that stretch reads LFFFHLLAGMDCFLLTAMAY. At 130 to 149 the chain is on the cytoplasmic side; it reads DRLLAICQPLTYSTRMSQTV. A helical membrane pass occupies residues 150–167; sequence QRMLVAASLACAFTNALT. At 168-205 the chain is on the extracellular side; it reads HTVAMSTLNFCGPNEVNHFYCDLPQLFQLSCSSTQLNE. Residues 206–229 traverse the membrane as a helical segment; sequence LLLFAVGFIMAGTPLVLIITAYSH. Topologically, residues 230–246 are cytoplasmic; it reads VAAAVLRIRSVEGRKKA. A helical membrane pass occupies residues 247 to 270; sequence FSTCGSHLTVVCLFFGRGIFNYMR. Residues 271 to 281 lie on the Extracellular side of the membrane; the sequence is LGSEEASDKDK. Residues 282–301 form a helical membrane-spanning segment; that stretch reads GVGVFNTVINPMLNPLIYSL. At 302–321 the chain is on the cytoplasmic side; the sequence is RNPDVQGALWQIFLGRRSLT.

The protein belongs to the G-protein coupled receptor 1 family.

Its subcellular location is the cell membrane. Functionally, odorant receptor. In Homo sapiens (Human), this protein is Olfactory receptor 3A2 (OR3A2).